The chain runs to 276 residues: Transmembrane protein 45B (276 aa).

The next 6 helical transmembrane spans lie at 7-27 (HALP…KYPL), 48-68 (IIEA…EQFV), 95-115 (LFFA…HVPL), 147-167 (IHSL…VEVV), 181-201 (LLLL…PPFG), and 213-233 (IMFV…ILAA). Phosphoserine occurs at positions 271 and 273.

Belongs to the TMEM45 family.

The protein resides in the endosome membrane. The protein localises to the lysosome membrane. It localises to the golgi apparatus. Its subcellular location is the trans-Golgi network membrane. Its function is as follows. Plays a role in innate immunity. The sequence is that of Transmembrane protein 45B (TMEM45B) from Bos taurus (Bovine).